The primary structure comprises 690 residues: Calpain-9 (690 aa).

Residues 1-23 (MPYLHRSLRPQPQPVPGDARTIH) form a disordered region. The Calpain catalytic domain occupies 42–337 (LFEDADFPAS…FDKVEICNLT (296 aa)). Ca(2+)-binding residues include Leu-81, Gly-83, and Asp-88. Residue Cys-97 is part of the active site. Glu-167 contributes to the Ca(2+) binding site. Active-site residues include His-254 and Asn-278. Ca(2+) is bound by residues Glu-284, Asp-291, Leu-312, Asp-314, and Glu-316. The tract at residues 338–521 (PDALEDSALH…PQEEETEEEQ (184 aa)) is domain III. EF-hand domains lie at 518–552 (EEEQQFRALFQRVAGEDMEVSAEELEYVLNAVLQK), 561–589 (LSLLSCRNIISLMDTSGNGKLEFEEFRVF), and 591–626 (DKLKHWMDLFLQFDVDKSGTMSSYELRTALKAAGFQ). The tract at residues 522-690 (QFRALFQRVA…NEFISLTMNI (169 aa)) is domain IV. Ca(2+) is bound by residues Asp-574, Ser-576, Asn-578, Lys-580, Glu-585, Asp-604, Asp-606, Ser-608, Thr-610, and Glu-615.

This sequence belongs to the peptidase C2 family. Predominantly expressed in stomach and small intestine, although low levels of expression in other organs.

It is found in the cytoplasm. Functionally, calcium-regulated non-lysosomal thiol-protease. This chain is Calpain-9 (Capn9), found in Mus musculus (Mouse).